Here is a 140-residue protein sequence, read N- to C-terminus: Putative pre-16S rRNA nuclease (140 aa).

The protein belongs to the YqgF nuclease family.

The protein resides in the cytoplasm. Could be a nuclease involved in processing of the 5'-end of pre-16S rRNA. The sequence is that of Putative pre-16S rRNA nuclease from Mannheimia succiniciproducens (strain KCTC 0769BP / MBEL55E).